Consider the following 401-residue polypeptide: Elongation factor Tu, apicoplast (401 aa).

In terms of domain architecture, tr-type G spans 10–206 (KPHINIGTIG…ALDSYIPLPK (197 aa)). The interval 19-26 (GHVDHGKT) is G1. Position 19-26 (19-26 (GHVDHGKT)) interacts with GTP. Threonine 26 provides a ligand contact to Mg(2+). The tract at residues 60-64 (GITIK) is G2. Positions 81-84 (DCPG) are G3. GTP-binding positions include 81–85 (DCPGH) and 136–139 (NKID). Residues 136 to 139 (NKID) form a G4 region. A G5 region spans residues 173 to 175 (SAL).

The protein belongs to the TRAFAC class translation factor GTPase superfamily. Classic translation factor GTPase family. EF-Tu/EF-1A subfamily. Monomer.

The protein resides in the plastid. It localises to the apicoplast. It carries out the reaction GTP + H2O = GDP + phosphate + H(+). Functionally, GTP hydrolase that promotes the GTP-dependent binding of aminoacyl-tRNA to the A-site of ribosomes during protein biosynthesis. This Toxoplasma gondii protein is Elongation factor Tu, apicoplast (tufA).